The sequence spans 197 residues: Zinc finger protein 581 (197 aa).

The span at 1–10 (MLVLPSPCPQ) shows a compositional bias: pro residues. Residues 1 to 52 (MLVLPSPCPQPLAFSSVETMEGPPRRTCRSPEPGPSSSIGSPQASSPPRPNH) form a disordered region. The span at 35 to 44 (PSSSIGSPQA) shows a compositional bias: low complexity. 4 consecutive C2H2-type zinc fingers follow at residues 87-109 (YSCPVCSRVFEYMSYLQRHSITH), 115-137 (FECDICGKAFKRASHLARHHSIH), 145-167 (HGCPLCPRRFRDAGELAQHSRVH), and 173-196 (FQCPHCPRRFMEQNTLQKHTRWKH).

Its subcellular location is the nucleus. May be involved in transcriptional regulation. This is Zinc finger protein 581 (ZNF581) from Homo sapiens (Human).